A 207-amino-acid chain; its full sequence is MTLPDFRLIRLLPLASLVLTACTINAPKGPGKSPDSPQWRQHQQDVRKLNQYQTRGAFAYISDDQKVYARFFWQQTGQDRYRLLLTNPLGSTELELNAQPGNVQLVDNKGQRYTADDAEEMIGKLTGMPIPLNSLRQWILGLPGDATDYTLDDQYRLSEVNYHQDGKNWKVVYSGYDSKTQPAMPANMELSDGSQRIKLKMDNWIVK.

Residues 1-21 form the signal peptide; it reads MTLPDFRLIRLLPLASLVLTA. The N-palmitoyl cysteine moiety is linked to residue cysteine 22. Cysteine 22 carries S-diacylglycerol cysteine lipidation.

Belongs to the LolB family. As to quaternary structure, monomer.

The protein localises to the cell outer membrane. Functionally, plays a critical role in the incorporation of lipoproteins in the outer membrane after they are released by the LolA protein. This is Outer-membrane lipoprotein LolB from Citrobacter koseri (strain ATCC BAA-895 / CDC 4225-83 / SGSC4696).